The primary structure comprises 502 residues: Lysine--tRNA ligase (502 aa).

The Mg(2+) site is built by Glu-410 and Glu-417.

It belongs to the class-II aminoacyl-tRNA synthetase family. As to quaternary structure, homodimer. The cofactor is Mg(2+).

Its subcellular location is the cytoplasm. It carries out the reaction tRNA(Lys) + L-lysine + ATP = L-lysyl-tRNA(Lys) + AMP + diphosphate. This Photobacterium profundum (strain SS9) protein is Lysine--tRNA ligase.